We begin with the raw amino-acid sequence, 660 residues long: MAAAVATGVAPATMVDQVPSPTAQTSVQVPVSIPLPSPVVVADQTHPNSSLYAGDLDPKVTEAHLFDLFKHVANVVSVRVCRDQNRRSLGYAYINFSNPNDAYRAMEALNYTPLFDRPIRIMLSNRDPSTRLSGKGNIFIKNLDASIDNKALFETFSSFGTILSCKVAMDVTGRSKGYGFVQFEKEESAQAAIDKLNGMLMNDKQVFVGHFIRRQERARDENTPTPRFTNVYVKNLPKEIGEDELRKTFGKFGVISSAVVMRDQSGNSRCFGFVNFECTEAAASAVEKMNGISLGDDVLYVGRAQKKSEREEELRRKFEQERINRFEKSQGANLYLKNLDDSVDDEKLKEMFSEYGNVTSSKVMLNPQGMSRGFGFVAYSNPEEALRALSEMNGKMIGRKPLYIALAQRKEDRRAHLQALFSQIRAPGPMSGFHHPPGGPMPGPPQHMYVGQNGASMVPSQPIGYGFQPQFMPGMRPGSGPGNFIVPYPLQRQPQTGPRMGFRRGATNVQQHIQQQQLMHRNPSPGMRYMNGASNGRNGMDSSVPQGILPPIIPLPIDASSISHQKAPLLPISKLTSSLASASPADRTRMLGEQLYPLVERHEPLHVAKVTGMLLEMDQAEILHLMESPEALKSKVSEALDVLRLSVDPTDHDLGFSTTD.

RRM domains follow at residues 49–126 (SSLY…LSNR), 136–213 (GNIF…HFIR), 229–306 (TNVY…RAQK), and 332–409 (ANLY…LAQR). The 78-residue stretch at 571-648 (PISKLTSSLA…ALDVLRLSVD (78 aa)) folds into the PABC domain.

Belongs to the polyadenylate-binding protein type-1 family. In terms of tissue distribution, expressed predominantly in immature flowers. Detected in tapetum and pollen. Strongly expressed in immatures siliques.

The protein resides in the cytoplasm. Its subcellular location is the nucleus. In terms of biological role, binds the poly(A) tail of mRNA. Appears to be an important mediator of the multiple roles of the poly(A) tail in mRNA biogenesis, stability and translation. In the cytoplasm, affects both translation and mRNA decay. Inhibits the polyadenylated RNA degradation by the Rrp41p 3'--&gt;5' exonuclease in vitro. Binds with the 5'UTRs of PAB2, PAB3 and with a lower affinity with the 5'UTR of PAB5. In Arabidopsis thaliana (Mouse-ear cress), this protein is Polyadenylate-binding protein 3 (PAB3).